Consider the following 431-residue polypeptide: Enolase (431 aa).

Residue Gln167 participates in (2R)-2-phosphoglycerate binding. Glu209 serves as the catalytic Proton donor. Mg(2+)-binding residues include Asp246, Glu290, and Asp317. 4 residues coordinate (2R)-2-phosphoglycerate: Lys342, Arg371, Ser372, and Lys393. The active-site Proton acceptor is the Lys342.

Belongs to the enolase family. As to quaternary structure, component of the RNA degradosome, a multiprotein complex involved in RNA processing and mRNA degradation. Mg(2+) serves as cofactor.

The protein localises to the cytoplasm. It localises to the secreted. The protein resides in the cell surface. It carries out the reaction (2R)-2-phosphoglycerate = phosphoenolpyruvate + H2O. The protein operates within carbohydrate degradation; glycolysis; pyruvate from D-glyceraldehyde 3-phosphate: step 4/5. Catalyzes the reversible conversion of 2-phosphoglycerate (2-PG) into phosphoenolpyruvate (PEP). It is essential for the degradation of carbohydrates via glycolysis. The protein is Enolase of Pectobacterium atrosepticum (strain SCRI 1043 / ATCC BAA-672) (Erwinia carotovora subsp. atroseptica).